We begin with the raw amino-acid sequence, 379 residues long: Gonadotropin-releasing hormone II receptor (379 aa).

Residues 1–40 (MSAGNGTPWGSAVGEEAWAGSGVAVEGSELPTFSTAAKVR) lie on the Extracellular side of the membrane. The helical transmembrane segment at 41–60 (VGVTIVLFVSSAGGNLAVLW) threads the bilayer. At 61 to 76 (SVTRPQPSQLRPSPVR) the chain is on the cytoplasmic side. The helical transmembrane segment at 77 to 96 (TLFAHLAAADLLVTFVVMPL) threads the bilayer. At 97 to 114 (DATWNITVQWLAGDIACR) the chain is on the extracellular side. Residue Asn-101 is glycosylated (N-linked (GlcNAc...) asparagine). Cys-113 and Cys-188 form a disulfide bridge. The chain crosses the membrane as a helical span at residues 115 to 136 (TLMFLKLMAMYSAAFLPVVIGL). Residues 137–160 (DRQAAVLNPLGSRSGVRKLLGAAW) lie on the Cytoplasmic side of the membrane. A helical membrane pass occupies residues 161–178 (GLSFLLALPQLFLFHTVH). At 179–204 (RAGPVPFTQCVTKGSFKARWQETTYN) the chain is on the extracellular side. A helical transmembrane segment spans residues 205–224 (LFTFCCLFLLPLIAMAICYS). Residues 225 to 278 (RIVLSVSSPQTRKGSHAPAGEFALRRSFDNRPRVCLRALRLALLILLTFILCWT) lie on the Cytoplasmic side of the membrane. Residues 279-297 (PYYLLGLWYWFSPTMLTEV) form a helical membrane-spanning segment. At 298–303 (PPSLSH) the chain is on the extracellular side. Residues 304 to 323 (ILFLFGLLNAPLDPLLYGAF) traverse the membrane as a helical segment. Residues 324 to 379 (TFGCRRGHQELSIDSSKEGSGRMLQQEIHALRQQEVQKTVTSRSAGETKGISITSI) are Cytoplasmic-facing.

This sequence belongs to the G-protein coupled receptor 1 family. Post-translationally, phosphorylated on the C-terminal cytoplasmic tail.

It localises to the cell membrane. Its function is as follows. Receptor for gonadotropin releasing hormone II (GnRH II). This receptor mediates its action by association with G proteins that activate a phosphatidylinositol-calcium second messenger system. The polypeptide is Gonadotropin-releasing hormone II receptor (GNRHR2) (Chlorocebus aethiops (Green monkey)).